Here is a 209-residue protein sequence, read N- to C-terminus: Uracil phosphoribosyltransferase (209 aa).

5-phospho-alpha-D-ribose 1-diphosphate is bound by residues R79, R104, and 131 to 139; that span reads DPMLATGGS. Residues I194 and 199 to 201 each bind uracil; that span reads GDA. Position 200 (D200) interacts with 5-phospho-alpha-D-ribose 1-diphosphate.

It belongs to the UPRTase family. Mg(2+) serves as cofactor.

It carries out the reaction UMP + diphosphate = 5-phospho-alpha-D-ribose 1-diphosphate + uracil. It functions in the pathway pyrimidine metabolism; UMP biosynthesis via salvage pathway; UMP from uracil: step 1/1. Allosterically activated by GTP. In terms of biological role, catalyzes the conversion of uracil and 5-phospho-alpha-D-ribose 1-diphosphate (PRPP) to UMP and diphosphate. The polypeptide is Uracil phosphoribosyltransferase (Enterococcus faecalis (strain ATCC 700802 / V583)).